A 432-amino-acid chain; its full sequence is Adenylosuccinate synthetase (432 aa).

Residues Gly-13–Lys-19 and Gly-41–Thr-43 each bind GTP. Asp-14 functions as the Proton acceptor in the catalytic mechanism. Residues Asp-14 and Gly-41 each coordinate Mg(2+). IMP contacts are provided by residues Asp-14 to Lys-17, Asn-39 to His-42, Thr-130, Arg-144, Gln-225, Thr-240, and Arg-304. The active-site Proton donor is the His-42. Substrate is bound at residue Ser-300–Arg-306. Residues Arg-306, Lys-332–Asp-334, and Ser-415–Gly-417 each bind GTP.

Belongs to the adenylosuccinate synthetase family. Homodimer. Requires Mg(2+) as cofactor.

The protein localises to the cytoplasm. The enzyme catalyses IMP + L-aspartate + GTP = N(6)-(1,2-dicarboxyethyl)-AMP + GDP + phosphate + 2 H(+). The protein operates within purine metabolism; AMP biosynthesis via de novo pathway; AMP from IMP: step 1/2. Its function is as follows. Plays an important role in the de novo pathway of purine nucleotide biosynthesis. Catalyzes the first committed step in the biosynthesis of AMP from IMP. This Blochmanniella pennsylvanica (strain BPEN) protein is Adenylosuccinate synthetase.